Consider the following 206-residue polypeptide: MAKYLGPKLKLCRRENTDLFFKSGIRAIDSKCKFDQFPGQHGSKRQRLSDYGVQLREKQKVRRLYGILEAQFRNYYKHASRLKGNTGENLLFLLENRLDNVTYRIGFGSTRAEARQLVSHKSILVNNCTVNIPSYQVSPGDVISIHKNSKLQSRIKAALELSEQRETPIWIEVDFNKMQGIYKRVPERSDLSAEINEYLIIELYSK.

The S4 RNA-binding domain maps to 96–156 (NRLDNVTYRI…KNSKLQSRIK (61 aa)).

It belongs to the universal ribosomal protein uS4 family. As to quaternary structure, part of the 30S ribosomal subunit. Contacts protein S5. The interaction surface between S4 and S5 is involved in control of translational fidelity.

One of the primary rRNA binding proteins, it binds directly to 16S rRNA where it nucleates assembly of the body of the 30S subunit. Its function is as follows. With S5 and S12 plays an important role in translational accuracy. In Buchnera aphidicola subsp. Baizongia pistaciae (strain Bp), this protein is Small ribosomal subunit protein uS4.